The chain runs to 153 residues: Virion assembly protein OPG100 (153 aa).

The protein belongs to the orthopoxvirus OPG100 family. In terms of assembly, homodimer. Part of a complex composed of the kinase OPG054, OPG092, OPG114, OPG115, OPG142 and OPG157. Interacts with OPG175.

The protein resides in the virion. The protein localises to the host cytoplasm. In terms of biological role, late protein which is a part of a large complex required for early virion morphogenesis. This complex participates in the formation of virosomes and the incorporation of virosomal contents into nascent immature virions. Plays a role in DNA packaging during immature virions (IV) formation. This Vaccinia virus (strain Western Reserve) (VACV) protein is Virion assembly protein OPG100 (OPG100).